The sequence spans 348 residues: uncharacterized protein (348 aa).

This is an uncharacterized protein from Sulfolobus islandicus filamentous virus (isolate Iceland/Hveragerdi) (SIFV).